Reading from the N-terminus, the 101-residue chain is Citrate lyase acyl carrier protein (101 aa).

O-(phosphoribosyl dephospho-coenzyme A)serine is present on Ser-14.

It belongs to the CitD family. Oligomer with a subunit composition of (alpha,beta,gamma)6.

It localises to the cytoplasm. Its function is as follows. Covalent carrier of the coenzyme of citrate lyase. This Clostridium perfringens (strain 13 / Type A) protein is Citrate lyase acyl carrier protein.